We begin with the raw amino-acid sequence, 691 residues long: Elongation factor G (691 aa).

In terms of domain architecture, tr-type G spans 8–283; it reads EDYRNIGIMA…AVVDFLPSPL (276 aa). GTP-binding positions include 17 to 24, 81 to 85, and 135 to 138; these read AHIDAGKT, DTPGH, and NKMD.

The protein belongs to the TRAFAC class translation factor GTPase superfamily. Classic translation factor GTPase family. EF-G/EF-2 subfamily.

It is found in the cytoplasm. In terms of biological role, catalyzes the GTP-dependent ribosomal translocation step during translation elongation. During this step, the ribosome changes from the pre-translocational (PRE) to the post-translocational (POST) state as the newly formed A-site-bound peptidyl-tRNA and P-site-bound deacylated tRNA move to the P and E sites, respectively. Catalyzes the coordinated movement of the two tRNA molecules, the mRNA and conformational changes in the ribosome. The protein is Elongation factor G of Parvibaculum lavamentivorans (strain DS-1 / DSM 13023 / NCIMB 13966).